The chain runs to 510 residues: MDPSSAGAGGNSLASASCGDAQKRRVCYFYDPEVGNYYYGQGHPMKPHRVRMTHALLAHYGLLAPAKMEVLRPLPARGIDLCRFHSDDYVAFLRAVTPETQLGQVRALRRFNIGPDCPVFDGLYAYCQTYAGASVGAAVKLNHGTHDIAINWSGGLHHAKKSEASGFCYVNDIVLAILELLKLHERVLYIDIDIHHGDGVEEAFYTTNRVMTVSFHKFGDYFPGTGDIRDIGYSEGKYYCLNVPLDDGIDDDSYQSIFKPIISKVMEMYRPGAVVLQCGADSLSGDRLGCFNLSGKGHAECVKFMRSFNVPLLLLGGGGYTIRNVARCWCYETGVALGEELQEKLPYNEYYEYFGPEYSLYVAASNMENRNTNKQLEEIKCNILDNLSKLQHAPSVQFQERIPETKLPEPDEDQEDPDERHDPDSDMVLDDHKPTGHSARSLIHNIGVKREITETETKDQHGKRLTTEHKGPEPMAEDLGSSKQAPTADANAVAVNAPGNARNEPGSSPK.

Positions 24–338 (RRVCYFYDPE…WCYETGVALG (315 aa)) are histone deacetylase. Histidine 158 serves as the catalytic Proton donor/acceptor. The Zn(2+) site is built by aspartate 193, histidine 195, and aspartate 281. Residues 394-510 (PSVQFQERIP…ARNEPGSSPK (117 aa)) form a disordered region. Basic and acidic residues-rich tracts occupy residues 418–434 (DERH…DHKP) and 448–472 (VKRE…HKGP). Over residues 485–503 (APTADANAVAVNAPGNARN) the composition is skewed to low complexity.

It belongs to the histone deacetylase family. HD Type 1 subfamily. Zn(2+) is required as a cofactor. In terms of tissue distribution, expressed in roots.

It is found in the nucleus. It carries out the reaction N(6)-acetyl-L-lysyl-[histone] + H2O = L-lysyl-[histone] + acetate. Responsible for the deacetylation of lysine residues on the N-terminal part of the core histones (H2A, H2B, H3 and H4). Histone deacetylation gives a tag for epigenetic repression and plays an important role in transcriptional regulation, cell cycle progression and developmental events. Histone deacetylases act via the formation of large multiprotein complexes. In Oryza sativa subsp. japonica (Rice), this protein is Histone deacetylase 3.